Consider the following 129-residue polypeptide: Prefoldin subunit 6 (129 aa).

Ala2 carries the post-translational modification N-acetylalanine. Position 21 is an N6-acetyllysine (Lys21). N6-acetyllysine; alternate is present on Lys66. Lys66 participates in a covalent cross-link: Glycyl lysine isopeptide (Lys-Gly) (interchain with G-Cter in SUMO1); alternate. Lys66 participates in a covalent cross-link: Glycyl lysine isopeptide (Lys-Gly) (interchain with G-Cter in SUMO2); alternate.

The protein belongs to the prefoldin subunit beta family. As to quaternary structure, heterohexamer of two PFD-alpha type and four PFD-beta type subunits. Component of the PAQosome complex which is responsible for the biogenesis of several protein complexes and which consists of R2TP complex members RUVBL1, RUVBL2, RPAP3 and PIH1D1, URI complex members PFDN2, PFDN6, PDRG1, UXT and URI1 as well as ASDURF, POLR2E and DNAAF10/WDR92.

Functionally, binds specifically to cytosolic chaperonin (c-CPN) and transfers target proteins to it. Binds to nascent polypeptide chain and promotes folding in an environment in which there are many competing pathways for nonnative proteins. This chain is Prefoldin subunit 6 (PFDN6), found in Bos taurus (Bovine).